Consider the following 118-residue polypeptide: Ribonuclease P protein component (118 aa).

This sequence belongs to the RnpA family. As to quaternary structure, consists of a catalytic RNA component (M1 or rnpB) and a protein subunit.

It catalyses the reaction Endonucleolytic cleavage of RNA, removing 5'-extranucleotides from tRNA precursor.. RNaseP catalyzes the removal of the 5'-leader sequence from pre-tRNA to produce the mature 5'-terminus. It can also cleave other RNA substrates such as 4.5S RNA. The protein component plays an auxiliary but essential role in vivo by binding to the 5'-leader sequence and broadening the substrate specificity of the ribozyme. In Rickettsia typhi (strain ATCC VR-144 / Wilmington), this protein is Ribonuclease P protein component.